A 243-amino-acid polypeptide reads, in one-letter code: Beta-glucanase (243 aa).

Residues 1–27 form the signal peptide; sequence MSYRVKRMLMLLVTGLFLSLSTFAASA. The GH16 domain occupies 29-243; the sequence is AQTGGSFYEP…SLHWVRYTKR (215 aa). An intrachain disulfide couples cysteine 61 to cysteine 90. Glutamate 134 functions as the Nucleophile in the catalytic mechanism. Glutamate 138 (proton donor) is an active-site residue.

It belongs to the glycosyl hydrolase 16 family.

The enzyme catalyses Hydrolysis of (1-&gt;4)-beta-D-glucosidic linkages in beta-D-glucans containing (1-&gt;3)- and (1-&gt;4)-bonds.. The polypeptide is Beta-glucanase (bg1) (Bacillus licheniformis).